Reading from the N-terminus, the 117-residue chain is Large ribosomal subunit protein bL19 (117 aa).

Belongs to the bacterial ribosomal protein bL19 family.

Functionally, this protein is located at the 30S-50S ribosomal subunit interface and may play a role in the structure and function of the aminoacyl-tRNA binding site. The polypeptide is Large ribosomal subunit protein bL19 (Vibrio parahaemolyticus serotype O3:K6 (strain RIMD 2210633)).